Reading from the N-terminus, the 323-residue chain is tRNA U34 carboxymethyltransferase (323 aa).

Residues lysine 91, tryptophan 105, lysine 110, glycine 130, 152 to 154 (DPT), 181 to 182 (IE), methionine 196, tyrosine 200, and arginine 315 each bind carboxy-S-adenosyl-L-methionine.

It belongs to the class I-like SAM-binding methyltransferase superfamily. CmoB family. As to quaternary structure, homotetramer.

It carries out the reaction carboxy-S-adenosyl-L-methionine + 5-hydroxyuridine(34) in tRNA = 5-carboxymethoxyuridine(34) in tRNA + S-adenosyl-L-homocysteine + H(+). Catalyzes carboxymethyl transfer from carboxy-S-adenosyl-L-methionine (Cx-SAM) to 5-hydroxyuridine (ho5U) to form 5-carboxymethoxyuridine (cmo5U) at position 34 in tRNAs. The sequence is that of tRNA U34 carboxymethyltransferase from Escherichia coli (strain K12 / MC4100 / BW2952).